A 206-amino-acid polypeptide reads, in one-letter code: Urease accessory protein UreG (206 aa).

11–18 (GPVGSGKT) serves as a coordination point for GTP.

It belongs to the SIMIBI class G3E GTPase family. UreG subfamily. As to quaternary structure, homodimer. UreD, UreF and UreG form a complex that acts as a GTP-hydrolysis-dependent molecular chaperone, activating the urease apoprotein by helping to assemble the nickel containing metallocenter of UreC. The UreE protein probably delivers the nickel.

It is found in the cytoplasm. Functionally, facilitates the functional incorporation of the urease nickel metallocenter. This process requires GTP hydrolysis, probably effectuated by UreG. This Mycolicibacterium gilvum (strain PYR-GCK) (Mycobacterium gilvum (strain PYR-GCK)) protein is Urease accessory protein UreG.